The sequence spans 1140 residues: Multiple epidermal growth factor-like domains protein 10 (1140 aa).

The first 25 residues, 1–25 (MVISLNSCLSFICLLLCHWIGTASP), serve as a signal peptide directing secretion. A necessary for interaction with AP2M1, self-assembly and formation of the irregular, mosaic-like adhesion pattern region spans residues 1 to 857 (MVISLNSCLS…ALPADSYQIG (857 aa)). Over 26-857 (LNLEDPNVCS…ALPADSYQIG (832 aa)) the chain is Extracellular. The 78-residue stretch at 30 to 107 (DPNVCSHWES…FYESGEMCVP (78 aa)) folds into the EMI domain. 48 disulfides stabilise this stretch: Cys-34–Cys-95, Cys-60–Cys-69, Cys-94–Cys-105, Cys-109–Cys-118, Cys-113–Cys-124, Cys-126–Cys-135, Cys-148–Cys-160, Cys-154–Cys-167, Cys-169–Cys-178, Cys-191–Cys-203, Cys-197–Cys-210, Cys-212–Cys-221, Cys-234–Cys-246, Cys-240–Cys-253, Cys-255–Cys-264, Cys-281–Cys-289, Cys-283–Cys-296, Cys-298–Cys-307, Cys-320–Cys-332, Cys-326–Cys-339, Cys-341–Cys-350, Cys-409–Cys-421, Cys-415–Cys-428, Cys-430–Cys-439, Cys-456–Cys-464, Cys-458–Cys-471, Cys-473–Cys-482, Cys-495–Cys-507, Cys-501–Cys-514, Cys-516–Cys-525, Cys-542–Cys-550, Cys-544–Cys-557, Cys-559–Cys-568, Cys-581–Cys-593, Cys-587–Cys-600, Cys-602–Cys-611, Cys-669–Cys-681, Cys-675–Cys-688, Cys-690–Cys-699, Cys-716–Cys-724, Cys-718–Cys-731, Cys-733–Cys-742, Cys-755–Cys-767, Cys-761–Cys-774, Cys-776–Cys-785, Cys-802–Cys-810, Cys-804–Cys-817, and Cys-819–Cys-828. EGF-like domains follow at residues 106–136 (VPHC…TNCS), 144–179 (WGPH…WRCE), 187–222 (YGND…AFCE), 230–265 (HGPQ…TVCG), 278–308 (SQEC…ERCQ), 316–351 (YGVL…ERCE), 405–440 (YGEA…IDCS), 453–483 (SSRC…VDCS), 491–526 (WGFG…EKCE), 539–569 (AERC…VHCD), 577–612 (WGPN…TTCQ), 665–700 (FGKN…SDCS), 713–743 (IHTC…LYCT), 751–786 (YGKD…RHCE), and 799–829 (RQIC…ARCD). An N-linked (GlcNAc...) asparagine glycan is attached at Asn-134. Asn-496 carries an N-linked (GlcNAc...) asparagine glycan. Residues 858-878 (AIAGIIILVLVVLFLLALFII) traverse the membrane as a helical segment. Residues 879–1140 (YRHKQKGKES…SSSNSSSSSE (262 aa)) are Cytoplasmic-facing. Positions 945–1140 (RDRMTVTKSK…SSSNSSSSSE (196 aa)) are necessary for formation of large intracellular vacuoles. Position 1030 is a phosphotyrosine; by SRC (Tyr-1030). Residues 1111–1140 (YDLLPVRDSSSSPKQEDSGGSSSNSSSSSE) form a disordered region. The segment covering 1128–1140 (SGGSSSNSSSSSE) has biased composition (low complexity).

Belongs to the MEGF family. As to quaternary structure, homomer. Interacts with GULP1 and ABCA1. Interacts with AP2M1. Does not interact with MEGF11. Binds with high affinity to complement C1q. Interacts (via the cytoplasmic domain) with NOTCH1 (via NICD domain). In terms of processing, phosphorylated on tyrosine residues. Phosphorylation at Tyr-1030 may be important for muscle cell proliferation. Ubiquitinated; mono- and polyubiquitinated forms are detected. Expressed in muscle (at protein level).

The protein localises to the cell membrane. It localises to the cell projection. It is found in the phagocytic cup. Its function is as follows. Membrane receptor involved in phagocytosis by macrophages and astrocytes of apoptotic cells. Receptor for C1q, an eat-me signal, that binds phosphatidylserine expressed on the surface of apoptotic cells. Cooperates with ABCA1 within the process of engulfment. Promotes the formation of large intracellular vacuoles and may be responsible for the uptake of amyloid-beta peptides. Necessary for astrocyte-dependent apoptotic neuron clearance in the developing cerebellum. Plays role in muscle cell proliferation, adhesion and motility. Is also an essential factor in the regulation of myogenesis. Controls the balance between skeletal muscle satellite cells proliferation and differentiation through regulation of the notch signaling pathway. May also function in the mosaic spacing of specific neuron subtypes in the retina through homotypic retinal neuron repulsion. Mosaics provide a mechanism to distribute each cell type evenly across the retina, ensuring that all parts of the visual field have access to a full set of processing elements. This Homo sapiens (Human) protein is Multiple epidermal growth factor-like domains protein 10.